A 262-amino-acid polypeptide reads, in one-letter code: Octopine permease ATP-binding protein P (262 aa).

An ABC transporter domain is found at 9–254 (VQLKDIRKNF…PRTDRFRQFL (246 aa)). 41-48 (GSSGSGKS) contacts ATP.

It belongs to the ABC transporter superfamily.

It localises to the cell inner membrane. In terms of biological role, component of the octopine active transport system probably consisting of four subunits: Q, M, P and T. The sequence is that of Octopine permease ATP-binding protein P (occP) from Rhizobium radiobacter (Agrobacterium tumefaciens).